We begin with the raw amino-acid sequence, 644 residues long: Acetolactate synthase 1, chloroplastic (644 aa).

A chloroplast-targeting transit peptide spans 1 to 43 (MATTAAAAAAALSAAATAKTGRKNHQRHHVLPARGRVGAAAVR). The disordered stretch occupies residues 47 to 67 (VSPVTPPSPAPPATPLRPWGP). Positions 50-61 (VTPPSPAPPATP) are enriched in pro residues. E118 serves as a coordination point for thiamine diphosphate. C138 and C284 are joined by a disulfide. FAD contacts are provided by residues R220, 326–347 (HGTV…FGVR), and 369–388 (DIDP…ICAD). The tract at residues 461–541 (QHQMWAAQYY…VKVMVLNNQH (81 aa)) is thiamine pyrophosphate binding. Mg(2+) is bound by residues D512 and N539.

Belongs to the TPP enzyme family. Mg(2+) serves as cofactor. Thiamine diphosphate is required as a cofactor.

Its subcellular location is the plastid. It is found in the chloroplast. The catalysed reaction is 2 pyruvate + H(+) = (2S)-2-acetolactate + CO2. It functions in the pathway amino-acid biosynthesis; L-isoleucine biosynthesis; L-isoleucine from 2-oxobutanoate: step 1/4. It participates in amino-acid biosynthesis; L-valine biosynthesis; L-valine from pyruvate: step 1/4. The chain is Acetolactate synthase 1, chloroplastic (ALS1) from Oryza sativa subsp. japonica (Rice).